The following is a 340-amino-acid chain: Anthranilate phosphoribosyltransferase (340 aa).

5-phospho-alpha-D-ribose 1-diphosphate contacts are provided by residues Gly-82, 85–86, Thr-90, 92–95, 110–118, and Ala-122; these read GD, NISS, and KHGGRSVSS. Residue Gly-82 participates in anthranilate binding. A Mg(2+)-binding site is contributed by Ser-94. An anthranilate-binding site is contributed by Arg-168. Positions 227 and 228 each coordinate Mg(2+).

It belongs to the anthranilate phosphoribosyltransferase family. Homodimer. Mg(2+) is required as a cofactor.

The catalysed reaction is N-(5-phospho-beta-D-ribosyl)anthranilate + diphosphate = 5-phospho-alpha-D-ribose 1-diphosphate + anthranilate. It participates in amino-acid biosynthesis; L-tryptophan biosynthesis; L-tryptophan from chorismate: step 2/5. In terms of biological role, catalyzes the transfer of the phosphoribosyl group of 5-phosphorylribose-1-pyrophosphate (PRPP) to anthranilate to yield N-(5'-phosphoribosyl)-anthranilate (PRA). This is Anthranilate phosphoribosyltransferase from Dechloromonas aromatica (strain RCB).